Consider the following 395-residue polypeptide: Neuromedin-U receptor 2 (395 aa).

Topologically, residues M1 to S41 are extracellular. N-linked (GlcNAc...) asparagine glycans are attached at residues N6 and N19. A helical membrane pass occupies residues V42 to I62. The Cytoplasmic segment spans residues A63–Y74. The helical transmembrane segment at Y75–V95 threads the bilayer. Residues Y96–T115 lie on the Extracellular side of the membrane. C111 and C196 are disulfide-bonded. The chain crosses the membrane as a helical span at residues A116–V138. Topologically, residues A139 to R157 are cytoplasmic. The chain crosses the membrane as a helical span at residues I158 to G178. Residues I179–T212 are Extracellular-facing. N186 carries an N-linked (GlcNAc...) asparagine glycan. A helical transmembrane segment spans residues S213–L233. The Cytoplasmic portion of the chain corresponds to R234–S257. Residues V258–V278 traverse the membrane as a helical segment. At D279–L293 the chain is on the extracellular side. Residues A294 to V314 form a helical membrane-spanning segment. Residues N315–P395 lie on the Cytoplasmic side of the membrane.

It belongs to the G-protein coupled receptor 1 family. Expressed primarily in brain tissues, more specifically in medulla and spinal cord. Widespread distribution in peripheral tissues.

The protein localises to the cell membrane. Functionally, receptor for the neuromedin-U and neuromedin-S neuropeptides. This chain is Neuromedin-U receptor 2 (Nmur2), found in Mus musculus (Mouse).